The chain runs to 255 residues: Small ribosomal subunit protein eS1 (255 aa).

Position 2 is an N-acetylalanine; partial (A2).

Belongs to the eukaryotic ribosomal protein eS1 family. In terms of assembly, component of the small ribosomal subunit. Mature ribosomes consist of a small (40S) and a large (60S) subunit. The 40S subunit contains about 33 different proteins and 1 molecule of RNA (18S). The 60S subunit contains about 49 different proteins and 3 molecules of RNA (25S, 5.8S and 5S).

It is found in the cytoplasm. This Pyrenophora tritici-repentis (strain Pt-1C-BFP) (Wheat tan spot fungus) protein is Small ribosomal subunit protein eS1 (rps1).